The primary structure comprises 275 residues: 2-dehydro-3-deoxyphosphooctonate aldolase (275 aa).

It belongs to the KdsA family.

The protein resides in the cytoplasm. It catalyses the reaction D-arabinose 5-phosphate + phosphoenolpyruvate + H2O = 3-deoxy-alpha-D-manno-2-octulosonate-8-phosphate + phosphate. Its pathway is carbohydrate biosynthesis; 3-deoxy-D-manno-octulosonate biosynthesis; 3-deoxy-D-manno-octulosonate from D-ribulose 5-phosphate: step 2/3. The protein operates within bacterial outer membrane biogenesis; lipopolysaccharide biosynthesis. This is 2-dehydro-3-deoxyphosphooctonate aldolase from Francisella tularensis subsp. mediasiatica (strain FSC147).